Reading from the N-terminus, the 279-residue chain is MKLKLYLIPLLASGIILSACSSTTSQVISSLSSAQKYFEANKGELNKNNVINILKDGYNSDPNKTVNALLAGWKYTLMDQKLLENNLDPSRFKNTFGPNKNKDDVTPNISEKGLFLNETFTGLGSQIAEVFNVQKQIVSGFSYSWTSPKSFKVNIHIKMEGMINEKSKETIKSFLSNKDSNGSNSVEESEYTGDKAKFTADFIFSYTPPTGGTRSLTDKSFDVITNMINFPADVKIDVNTSHNKLNELLEKNDQVKRMKSRTFNGRNIDLLPFFYYALL.

Residues 1 to 19 (MKLKLYLIPLLASGIILSA) form the signal peptide. Cysteine 20 is lipidated: N-palmitoyl cysteine. Residue cysteine 20 is the site of S-diacylglycerol cysteine attachment.

Belongs to the MG439/MG440 family.

Its subcellular location is the cell membrane. This is an uncharacterized protein from Mycoplasma pneumoniae (strain ATCC 29342 / M129 / Subtype 1) (Mycoplasmoides pneumoniae).